The chain runs to 420 residues: UDP-N-acetylglucosamine 1-carboxyvinyltransferase 2 (420 aa).

22 to 23 (KN) lines the phosphoenolpyruvate pocket. R92 is a binding site for UDP-N-acetyl-alpha-D-glucosamine. Residue C116 is the Proton donor of the active site. C116 is modified (2-(S-cysteinyl)pyruvic acid O-phosphothioketal). Residues 121-125 (RPIDL), D307, and I329 each bind UDP-N-acetyl-alpha-D-glucosamine.

This sequence belongs to the EPSP synthase family. MurA subfamily.

It localises to the cytoplasm. The catalysed reaction is phosphoenolpyruvate + UDP-N-acetyl-alpha-D-glucosamine = UDP-N-acetyl-3-O-(1-carboxyvinyl)-alpha-D-glucosamine + phosphate. It functions in the pathway cell wall biogenesis; peptidoglycan biosynthesis. Functionally, cell wall formation. Adds enolpyruvyl to UDP-N-acetylglucosamine. This chain is UDP-N-acetylglucosamine 1-carboxyvinyltransferase 2, found in Streptococcus thermophilus (strain CNRZ 1066).